Consider the following 213-residue polypeptide: Histidine biosynthesis bifunctional protein HisIE (213 aa).

The phosphoribosyl-AMP cyclohydrolase stretch occupies residues Met1 to Phe114. The segment at Leu115–His213 is phosphoribosyl-ATP pyrophosphohydrolase.

It in the N-terminal section; belongs to the PRA-CH family. In the C-terminal section; belongs to the PRA-PH family.

It is found in the cytoplasm. The enzyme catalyses 1-(5-phospho-beta-D-ribosyl)-ATP + H2O = 1-(5-phospho-beta-D-ribosyl)-5'-AMP + diphosphate + H(+). It catalyses the reaction 1-(5-phospho-beta-D-ribosyl)-5'-AMP + H2O = 1-(5-phospho-beta-D-ribosyl)-5-[(5-phospho-beta-D-ribosylamino)methylideneamino]imidazole-4-carboxamide. The protein operates within amino-acid biosynthesis; L-histidine biosynthesis; L-histidine from 5-phospho-alpha-D-ribose 1-diphosphate: step 2/9. It participates in amino-acid biosynthesis; L-histidine biosynthesis; L-histidine from 5-phospho-alpha-D-ribose 1-diphosphate: step 3/9. This Blochmanniella floridana protein is Histidine biosynthesis bifunctional protein HisIE.